The sequence spans 272 residues: Orotidine 5'-phosphate decarboxylase (272 aa).

Residue Lys-95 is the Proton donor of the active site.

The protein belongs to the OMP decarboxylase family. Type 2 subfamily.

It catalyses the reaction orotidine 5'-phosphate + H(+) = UMP + CO2. Its pathway is pyrimidine metabolism; UMP biosynthesis via de novo pathway; UMP from orotate: step 2/2. This Bordetella avium (strain 197N) protein is Orotidine 5'-phosphate decarboxylase.